Consider the following 365-residue polypeptide: Nicotinate N-methyltransferase 1 (365 aa).

Asp-232 contacts S-adenosyl-L-methionine.

This sequence belongs to the class I-like SAM-binding methyltransferase superfamily. Cation-independent O-methyltransferase family.

It carries out the reaction nicotinate + S-adenosyl-L-methionine = N-methylnicotinate + S-adenosyl-L-homocysteine. Functionally, involved in nicotinate detoxification in planta. Catalyzes the conversion of nicotinate to N-methylnicotinate, which is a detoxified form of endogenous nicotinate in planta. The polypeptide is Nicotinate N-methyltransferase 1 (Oryza sativa subsp. japonica (Rice)).